We begin with the raw amino-acid sequence, 26 residues long: GLWKNMLSGIGKLAGEAALGAVKTLV.

V26 is subject to Valine amide.

In terms of tissue distribution, expressed by the skin glands.

Its subcellular location is the secreted. Has antimicrobial activity. The chain is Dermaseptin-J2 from Phasmahyla jandaia (Jandaia leaf frog).